Consider the following 594-residue polypeptide: UvrABC system protein C (594 aa).

A GIY-YIG domain is found at Asn13–Ile99. In terms of domain architecture, UVR spans Asp205–Ile240.

Belongs to the UvrC family. Interacts with UvrB in an incision complex.

The protein localises to the cytoplasm. In terms of biological role, the UvrABC repair system catalyzes the recognition and processing of DNA lesions. UvrC both incises the 5' and 3' sides of the lesion. The N-terminal half is responsible for the 3' incision and the C-terminal half is responsible for the 5' incision. The chain is UvrABC system protein C from Helicobacter acinonychis (strain Sheeba).